A 237-amino-acid chain; its full sequence is 6-carboxyhexanoate--CoA ligase (237 aa).

It belongs to the BioW family. Homodimer. The cofactor is Mg(2+).

It carries out the reaction heptanedioate + ATP + CoA = 6-carboxyhexanoyl-CoA + AMP + diphosphate. It participates in metabolic intermediate metabolism; pimeloyl-CoA biosynthesis; pimeloyl-CoA from pimelate: step 1/1. Catalyzes the transformation of pimelate into pimeloyl-CoA with concomitant hydrolysis of ATP to AMP. This chain is 6-carboxyhexanoate--CoA ligase, found in Methanocaldococcus jannaschii (strain ATCC 43067 / DSM 2661 / JAL-1 / JCM 10045 / NBRC 100440) (Methanococcus jannaschii).